Consider the following 315-residue polypeptide: Ribose-phosphate pyrophosphokinase (315 aa).

ATP-binding positions include 37 to 39 and 96 to 97; these read DGE and RQ. Mg(2+) contacts are provided by H131 and D170. The active site involves K194. Residues R196, D220, and 224–228 contribute to the D-ribose 5-phosphate site; that span reads DTGGT.

The protein belongs to the ribose-phosphate pyrophosphokinase family. Class I subfamily. Homohexamer. Requires Mg(2+) as cofactor.

It is found in the cytoplasm. It carries out the reaction D-ribose 5-phosphate + ATP = 5-phospho-alpha-D-ribose 1-diphosphate + AMP + H(+). It participates in metabolic intermediate biosynthesis; 5-phospho-alpha-D-ribose 1-diphosphate biosynthesis; 5-phospho-alpha-D-ribose 1-diphosphate from D-ribose 5-phosphate (route I): step 1/1. In terms of biological role, involved in the biosynthesis of the central metabolite phospho-alpha-D-ribosyl-1-pyrophosphate (PRPP) via the transfer of pyrophosphoryl group from ATP to 1-hydroxyl of ribose-5-phosphate (Rib-5-P). The chain is Ribose-phosphate pyrophosphokinase from Salmonella typhi.